The primary structure comprises 382 residues: Methylthioribose-1-phosphate isomerase (382 aa).

D257 (proton donor) is an active-site residue.

This sequence belongs to the eIF-2B alpha/beta/delta subunits family. MtnA subfamily.

It localises to the cytoplasm. The protein resides in the nucleus. It catalyses the reaction 5-(methylsulfanyl)-alpha-D-ribose 1-phosphate = 5-(methylsulfanyl)-D-ribulose 1-phosphate. Its pathway is amino-acid biosynthesis; L-methionine biosynthesis via salvage pathway; L-methionine from S-methyl-5-thio-alpha-D-ribose 1-phosphate: step 1/6. Its function is as follows. Catalyzes the interconversion of methylthioribose-1-phosphate (MTR-1-P) into methylthioribulose-1-phosphate (MTRu-1-P). This is Methylthioribose-1-phosphate isomerase from Paracoccidioides brasiliensis (strain Pb18).